Consider the following 193-residue polypeptide: Bcl-2-like protein 2 (193 aa).

Residue A2 is modified to N-acetylalanine. The BH4 signature appears at 9–29 (DTRALVADFVGYKLRQKGYVC). Positions 85 to 104 (ELFQGGPNWGRLVAFFVFGA) match the BH1 motif. The BH2 motif lies at 136 to 151 (DWIHSSGGWAEFTALY).

The protein belongs to the Bcl-2 family. As to quaternary structure, interacts with HIF3A (via C-terminus domain). Interacts with BOP.

The protein localises to the mitochondrion membrane. Promotes cell survival. Blocks dexamethasone-induced apoptosis. Mediates survival of postmitotic Sertoli cells by suppressing death-promoting activity of BAX. The polypeptide is Bcl-2-like protein 2 (BCL2L2) (Bos taurus (Bovine)).